A 443-amino-acid chain; its full sequence is tRNA modification GTPase MnmE (443 aa).

Arginine 23, glutamate 82, and lysine 121 together coordinate (6S)-5-formyl-5,6,7,8-tetrahydrofolate. The TrmE-type G domain occupies 215–364; sequence GTSIVLAGHP…LKQFIQKWIQ (150 aa). Asparagine 225 contributes to the K(+) binding site. GTP is bound by residues 225–230, 244–250, and 269–272; these read NAGKSS, TDIPGTT, and DSAG. Serine 229 is a Mg(2+) binding site. Threonine 244, isoleucine 246, and threonine 249 together coordinate K(+). Threonine 250 is a Mg(2+) binding site. Lysine 443 provides a ligand contact to (6S)-5-formyl-5,6,7,8-tetrahydrofolate.

This sequence belongs to the TRAFAC class TrmE-Era-EngA-EngB-Septin-like GTPase superfamily. TrmE GTPase family. Homodimer. Heterotetramer of two MnmE and two MnmG subunits. K(+) serves as cofactor.

Its subcellular location is the cytoplasm. Its function is as follows. Exhibits a very high intrinsic GTPase hydrolysis rate. Involved in the addition of a carboxymethylaminomethyl (cmnm) group at the wobble position (U34) of certain tRNAs, forming tRNA-cmnm(5)s(2)U34. In Chlamydia felis (strain Fe/C-56) (Chlamydophila felis), this protein is tRNA modification GTPase MnmE.